Here is a 786-residue protein sequence, read N- to C-terminus: Rho GTPase-activating protein 10 (786 aa).

In terms of domain architecture, BAR spans 7 to 262; it reads EFSDCYLDSP…IRQNPKDQKR (256 aa). The PH domain maps to 265-372; sequence QFTAEGYLYV…WLEALGGKEA (108 aa). Positions 389–574 constitute a Rho-GAP domain; sequence AQLDKMGFTI…ILIENHEKIF (186 aa). 2 disordered regions span residues 584 to 609 and 622 to 714; these read EPTC…RTKR and EGDS…PFPL. Positions 599 to 609 are enriched in basic residues; the sequence is QSKRQGQRTKR. Positions 634–649 are enriched in low complexity; the sequence is PSSSQDSLSTPSPTTS. Residues 673–701 show a composition bias toward polar residues; that stretch reads TATTPSQTRPSMVQWLNMQSPTTPSSNPA. Pro residues predominate over residues 702-714; the sequence is GTPPSPRMSPFPL. The region spanning 728-786 is the SH3 domain; that stretch reads VINRKARAVYPCEAEHSSELSFEIGAIFEDVQTSREPGWLEGTLNGKRGLIPQNYVKLL.

In terms of assembly, interacts with PKN3. Interacts with caspase-activated PAK2 proteolytic fragment PAK-2p34; the interaction does not affect ARHGAP10 GTPase activation activity towards RHOA and CDC42. Interacts via its SH3 domain with PTK2/FAK1. Interacts with PTK2B/PYK2; the interaction negatively regulates ARHGAP10 GTPase-activating activity. Interacts with MICAL1 and WDR44; complex formation might transit from GRAF2/ARHGAP10-MICAL1 to GRAF2/ARHGAP10-WDR44 complexes. Post-translationally, phosphorylated on tyrosine residues, probably involving PTK2B/PYK2. High levels of expression in brain, testes, liver, heart and kidney.

The protein localises to the cytoplasm. It is found in the perinuclear region. It localises to the cell membrane. The protein resides in the endosome membrane. In terms of biological role, GTPase-activating protein that catalyzes the conversion of active GTP-bound Rho GTPases to their inactive GDP-bound form, thus suppressing various Rho GTPase-mediated cellular processes. Also converts Cdc42 to an inactive GDP-bound state. Essential for PTKB2 regulation of cytoskeletal organization via Rho family GTPases. Inhibits PAK2 proteolytic fragment PAK-2p34 kinase activity and changes its localization from the nucleus to the perinuclear region. Stabilizes PAK-2p34 thereby increasing stimulation of cell death. Associates with MICAL1 on the endosomal membrane to promote Rab8-Rab10-dependent tubule extension. After dissociation with MICAL1, recruits WDR44 which connects the endoplasmic reticulum (ER) with the endosomal tubule, thereby participating in the export of a subset of neosynthesized proteins. The chain is Rho GTPase-activating protein 10 (Arhgap10) from Mus musculus (Mouse).